Reading from the N-terminus, the 316-residue chain is Lipoyl synthase (316 aa).

Residues methionine 1 to aspartate 19 show a composition bias toward basic and acidic residues. Positions methionine 1–valine 31 are disordered. Residues cysteine 55, cysteine 60, cysteine 66, cysteine 81, cysteine 85, cysteine 88, and serine 295 each contribute to the [4Fe-4S] cluster site. Positions tryptophan 67–leucine 284 constitute a Radical SAM core domain.

Belongs to the radical SAM superfamily. Lipoyl synthase family. [4Fe-4S] cluster is required as a cofactor.

Its subcellular location is the cytoplasm. The catalysed reaction is [[Fe-S] cluster scaffold protein carrying a second [4Fe-4S](2+) cluster] + N(6)-octanoyl-L-lysyl-[protein] + 2 oxidized [2Fe-2S]-[ferredoxin] + 2 S-adenosyl-L-methionine + 4 H(+) = [[Fe-S] cluster scaffold protein] + N(6)-[(R)-dihydrolipoyl]-L-lysyl-[protein] + 4 Fe(3+) + 2 hydrogen sulfide + 2 5'-deoxyadenosine + 2 L-methionine + 2 reduced [2Fe-2S]-[ferredoxin]. It functions in the pathway protein modification; protein lipoylation via endogenous pathway; protein N(6)-(lipoyl)lysine from octanoyl-[acyl-carrier-protein]: step 2/2. Its function is as follows. Catalyzes the radical-mediated insertion of two sulfur atoms into the C-6 and C-8 positions of the octanoyl moiety bound to the lipoyl domains of lipoate-dependent enzymes, thereby converting the octanoylated domains into lipoylated derivatives. This is Lipoyl synthase from Ruegeria sp. (strain TM1040) (Silicibacter sp.).